Consider the following 292-residue polypeptide: MSEEQTGIEVAVVSGLSGAGRSTAAKCLEDLGWFVVDNLPPELIATMVELGARSSGAITRVAVVMDVRSRAFTEDLGSVIKDLDARGYKPKVLFLEATDEVLIRRFEQVRRGHPLQGEGRLADGIAAERSLLSRLRSEADLVLDTTALSVHQLRAKIEDAFGTEASTRTRVTVLSFGYKYGLPMDADLVMDCRFLPNPFWIPELREFNGLDEEVRNYVLGQEGAEEFLVNYQQLLRLVGAGYHREGKRYLTLALGCTGGKHRSVALVEELARRLADDEGMMVKTVHRDLGRE.

15–22 (GLSGAGRS) lines the ATP pocket. 66–69 (DVRS) contributes to the GTP binding site.

It belongs to the RapZ-like family.

Its function is as follows. Displays ATPase and GTPase activities. This chain is Nucleotide-binding protein SACE_2139, found in Saccharopolyspora erythraea (strain ATCC 11635 / DSM 40517 / JCM 4748 / NBRC 13426 / NCIMB 8594 / NRRL 2338).